Consider the following 1058-residue polypeptide: Carbamoyl phosphate synthase large chain (1058 aa).

The tract at residues 1 to 401 (MAKRTDIKKI…CLLKACRSLE (401 aa)) is carboxyphosphate synthetic domain. ATP is bound by residues Arg129, Arg169, Gly175, Gly176, Arg208, Ile210, Glu215, Gly241, Ile242, His243, Gln284, and Glu298. An ATP-grasp 1 domain is found at 133–327 (KQLMKELGEP…IAKIAAKIAV (195 aa)). The Mg(2+) site is built by Gln284, Glu298, and Asn300. Mn(2+) is bound by residues Gln284, Glu298, and Asn300. Residues 402–546 (IGVHHNELKG…YSTYEWENES (145 aa)) are oligomerization domain. The interval 547–929 (IKSEKESVIV…ALYKAFEASY (383 aa)) is carbamoyl phosphate synthetic domain. The region spanning 671-861 (EKALKELGIP…MAQVATKLIL (191 aa)) is the ATP-grasp 2 domain. Positions 707, 746, 748, 752, 777, 778, 779, 780, 820, and 832 each coordinate ATP. Mg(2+) is bound by residues Gln820, Glu832, and Asn834. Residues Gln820, Glu832, and Asn834 each contribute to the Mn(2+) site. The MGS-like domain occupies 930 to 1058 (LHMPEYGTIV…ESRTFSIEAI (129 aa)). The tract at residues 930–1058 (LHMPEYGTIV…ESRTFSIEAI (129 aa)) is allosteric domain.

Belongs to the CarB family. In terms of assembly, composed of two chains; the small (or glutamine) chain promotes the hydrolysis of glutamine to ammonia, which is used by the large (or ammonia) chain to synthesize carbamoyl phosphate. Tetramer of heterodimers (alpha,beta)4. Mg(2+) serves as cofactor. Requires Mn(2+) as cofactor.

It catalyses the reaction hydrogencarbonate + L-glutamine + 2 ATP + H2O = carbamoyl phosphate + L-glutamate + 2 ADP + phosphate + 2 H(+). It carries out the reaction hydrogencarbonate + NH4(+) + 2 ATP = carbamoyl phosphate + 2 ADP + phosphate + 2 H(+). It functions in the pathway amino-acid biosynthesis; L-arginine biosynthesis; carbamoyl phosphate from bicarbonate: step 1/1. The protein operates within pyrimidine metabolism; UMP biosynthesis via de novo pathway; (S)-dihydroorotate from bicarbonate: step 1/3. Large subunit of the glutamine-dependent carbamoyl phosphate synthetase (CPSase). CPSase catalyzes the formation of carbamoyl phosphate from the ammonia moiety of glutamine, carbonate, and phosphate donated by ATP, constituting the first step of 2 biosynthetic pathways, one leading to arginine and/or urea and the other to pyrimidine nucleotides. The large subunit (synthetase) binds the substrates ammonia (free or transferred from glutamine from the small subunit), hydrogencarbonate and ATP and carries out an ATP-coupled ligase reaction, activating hydrogencarbonate by forming carboxy phosphate which reacts with ammonia to form carbamoyl phosphate. This is Carbamoyl phosphate synthase large chain from Streptococcus equi subsp. equi (strain 4047).